A 473-amino-acid chain; its full sequence is Flagellum-specific ATP synthase (473 aa).

187 to 194 (AGSGVGKS) provides a ligand contact to ATP.

The protein belongs to the ATPase alpha/beta chains family.

It is found in the cytoplasm. The enzyme catalyses ATP + H2O + 4 H(+)(in) = ADP + phosphate + 5 H(+)(out). Functionally, probable catalytic subunit of a protein translocase for flagellum-specific export, or a proton translocase involved in local circuits at the flagellum. In Agrobacterium fabrum (strain C58 / ATCC 33970) (Agrobacterium tumefaciens (strain C58)), this protein is Flagellum-specific ATP synthase (fliI).